A 577-amino-acid chain; its full sequence is Guanine nucleotide-binding protein-like 3-like protein (577 aa).

Over residues 1 to 30 (MMKIRHKNKKPGKGSKGCKKPARQNGKKVT) the composition is skewed to basic residues. A disordered region spans residues 1-75 (MMKIRHKNKK…VAREQERQRH (75 aa)). The segment at 9–28 (KKPGKGSKGCKKPARQNGKK) is required for nucleolar localization. Basic and acidic residues predominate over residues 42–75 (GNDHASREAELKKKRVEEMREKQQVAREQERQRH). Positions 43-103 (NDHASREAEL…QKEEVLQELN (61 aa)) form a coiled coil. The CP-type G domain occupies 118–304 (YKEFRKVVEY…LLDAPGIVPG (187 aa)). GTP is bound by residues 166 to 169 (NKID), 253 to 260 (GLPNVGKS), and 297 to 300 (DAPG).

It belongs to the TRAFAC class YlqF/YawG GTPase family. As to quaternary structure, interacts with MDM2; this interaction, which occurs in the nucleoplasm, stabilizes MDM2. Indirectly interacts with TP53, via MDM2-binding. Interacts with TERF1; this interaction probably occurs in the nucleoplasm and is increased during mitosis, when the nucleolus is disassembled. This binding may promote TERF1 homodimerization. Interacts with TERT.

The protein resides in the nucleus. It is found in the nucleolus. In terms of biological role, stabilizes TERF1 telomeric association by preventing TERF1 recruitment by PML. Stabilizes TERF1 protein by preventing its ubiquitination and hence proteasomal degradation. Does so by interfering with TERF1-binding to FBXO4 E3 ubiquitin-protein ligase. Required for cell proliferation. By stabilizing TRF1 protein during mitosis, promotes metaphase-to-anaphase transition. Stabilizes MDM2 protein by preventing its ubiquitination, and hence proteasomal degradation. By acting on MDM2, may affect TP53 activity. Required for normal processing of ribosomal pre-rRNA. Binds GTP. This is Guanine nucleotide-binding protein-like 3-like protein (Gnl3l) from Mus musculus (Mouse).